Reading from the N-terminus, the 878-residue chain is Phosphoenolpyruvate carboxylase (878 aa).

Residues His137 and Lys545 contribute to the active site.

It belongs to the PEPCase type 1 family. The cofactor is Mg(2+).

It carries out the reaction oxaloacetate + phosphate = phosphoenolpyruvate + hydrogencarbonate. Functionally, forms oxaloacetate, a four-carbon dicarboxylic acid source for the tricarboxylic acid cycle. The sequence is that of Phosphoenolpyruvate carboxylase from Yersinia pseudotuberculosis serotype O:1b (strain IP 31758).